Here is a 197-residue protein sequence, read N- to C-terminus: MSKATIELDFLGLEKKQTNNAPKPKFQKFLDRRRSFRDIQGAISKIDPEIIKSLLASTGNNSDSSAKSRSVPSTPREDQPQIPISPVHASLARSSTELVSGTVPMTIFYNGSVSVFQVSRNKAGEIMKVANEAASKKDESSMETDLSVILPTTLRPKLFGQNLEGDLPIARRKSLQRFLEKRKERLVSTSPYYPTSA.

Polar residues predominate over residues 57-73 (STGNNSDSSAKSRSVPS). The tract at residues 57-84 (STGNNSDSSAKSRSVPSTPREDQPQIPI) is disordered. The 35-residue stretch at 98 to 132 (LVSGTVPMTIFYNGSVSVFQVSRNKAGEIMKVANE) folds into the Tify domain. Positions 168-193 (PIARRKSLQRFLEKRKERLVSTSPYY) match the Jas motif. A Nuclear localization signal motif is present at residues 170-177 (ARRKSLQR).

The protein belongs to the TIFY/JAZ family. Homo- and heterodimer. Interacts with MYC2, MYC3, MYC4, AFPH2/NINJA, TIFY10A/JAZ1, TIFY10B/JAZ2, TIFY6B/JAZ3, TIFY6A/JAZ4, TIFY11B/JAZ6, TIFY5A/JAZ8, TIFY7/JAZ9, TIFY3A/JAZ11 and TIFY3B/JAZ12. Isoform 1 and isoform 2 interact with COI1. Isoform 3 does not interact with COI1. Interacts with RHD6 and RSL1. In terms of processing, ubiquitinated. Targeted for degradation by the SCF(COI1) E3 ubiquitin ligase-proteasome pathway during jasmonate signaling.

The protein localises to the nucleus. Its function is as follows. Repressor of jasmonate (JA) responses that lacks the entire Jas domain and possesses severe JA insensitivity and resistance to JA-induced degradation. Acts as an endogenous repressor of JA signal output in JA-stimulated cells. Modulator of JA-controlled growth inhibition in response to wounding. Functionally, repressor of jasmonate (JA) responses that lacks part of the Jas domain and possesses JA insensitivity and partial resistance to JA-induced degradation. Repressor of jasmonate (JA) responses. Interacts with and suppresses RHD6 and RSL1 transcription factor activities to negatively regulate jasmonate-stimulated root hair development. The chain is Protein TIFY 9 (TIFY9) from Arabidopsis thaliana (Mouse-ear cress).